Reading from the N-terminus, the 733-residue chain is Microtubule-associated protein tau (733 aa).

A compositionally biased stretch (basic and acidic residues) spans 1 to 16 (MADPRQEFDTMEDHAG). The interval 1-548 (MADPRQEFDT…PVPMPDLKNV (548 aa)) is disordered. An N-acetylalanine modification is found at A2. Residue Y18 is modified to Phosphotyrosine; by FYN. Residue K33 forms a Glycyl lysine isopeptide (Lys-Gly) (interchain with G-Cter in ubiquitin) linkage. S35 and S50 each carry phosphoserine. Residues 50–60 (SETSDAKSTPT) show a composition bias toward polar residues. 3 positions are modified to phosphothreonine: T58, T60, and T100. Position 115 is an omega-N-methylarginine (R115). Polar residues predominate over residues 126–137 (SDWTRQQVSSMS). Residues 157–172 (RPEDIEKSHPASELLR) show a composition bias toward basic and acidic residues. A Phosphoserine modification is found at S188. Positions 189–202 (EEEVDEDLTVDESS) are enriched in acidic residues. A compositionally biased stretch (polar residues) spans 203-212 (QDSPPSQASL). Composition is skewed to basic and acidic residues over residues 270 to 294 (EEGHEAAPEFTFHVEIKASTPKEQD) and 354 to 366 (ASKDRTGNDEKKA). Polar residues predominate over residues 413–427 (KHVSSVTPRNGSPGT). At T445 the chain carries Phosphothreonine. An Omega-N-methylarginine modification is found at R447. At S451 the chain carries Phosphoserine. K455 carries the post-translational modification N6,N6-dimethyllysine; alternate. N6-acetyllysine; alternate is present on K455. T461, T467, and T468 each carry phosphothreonine. At S470 the chain carries Phosphoserine. The residue at position 473 (T473) is a Phosphothreonine. Phosphoserine occurs at positions 477, 483, and 487. The segment covering 479–506 (EPPKSGERSGYSSPGSPGTPGSRSRTPS) has biased composition (low complexity). Position 489 is a phosphotyrosine (Y489). Phosphoserine is present on residues S490, S491, and S494. T497 and T504 each carry phosphothreonine. S506 bears the Phosphoserine mark. A Phosphothreonine modification is found at T509. K517 carries the N6-acetyllysine modification. Residue T523 is modified to Phosphothreonine. 3 positions are modified to phosphoserine: S527, S529, and S531. 4 Tau/MAP repeats span residues 536-566 (QTAPVPMPDLKNVRSKIGSTENLKHQPGGGK), 567-597 (VQIINKKLDLSNVQSKCGSKDNIKHVPGGGS), 598-628 (VQIVYKPVDLSKVTSKCGSLGNIHHKPGGGQ), and 629-660 (VEVKSEKLDFKDRVQSKIGSLDNITHVPGGGN). Residue K546 forms a Glycyl lysine isopeptide (Lys-Gly) (interchain with G-Cter in ubiquitin) linkage. An N6-acetyllysine; alternate modification is found at K551. The residue at position 551 (K551) is an N6-methyllysine; alternate. Residue K551 forms a Glycyl lysine isopeptide (Lys-Gly) (interchain with G-Cter in ubiquitin); alternate linkage. S554 is subject to Phosphoserine; by MARK1, BRSK1, BRSK2 and PHK. Residue K559 forms a Glycyl lysine isopeptide (Lys-Gly) (interchain with G-Cter in ubiquitin) linkage. K573 carries the N6-acetyllysine; alternate modification. Residue K573 forms a Glycyl lysine isopeptide (Lys-Gly) (interchain with G-Cter in ubiquitin); alternate linkage. 2 positions are modified to phosphoserine: S577 and S581. K582 carries the post-translational modification N6-acetyllysine. C583 and C614 are joined by a disulfide. A Phosphoserine modification is found at S585. K590 carries the post-translational modification N6-acetyllysine; alternate. K590 is covalently cross-linked (Glycyl lysine isopeptide (Lys-Gly) (interchain with G-Cter in ubiquitin); alternate). S597 carries the phosphoserine modification. K603 carries the N6,N6-dimethyllysine; alternate modification. N6-acetyllysine; alternate occurs at positions 603, 609, and 613. Glycyl lysine isopeptide (Lys-Gly) (interchain with G-Cter in ubiquitin); alternate cross-links involve residues K603, K609, and K613. S616 bears the Phosphoserine mark. Residues K623, K635, and K639 each carry the N6-acetyllysine; alternate modification. Residues K623, K635, and K639 each participate in a glycyl lysine isopeptide (Lys-Gly) (interchain with G-Cter in ubiquitin); alternate cross-link. Omega-N-methylarginine is present on R641. A Phosphoserine modification is found at S644. Residue K645 forms a Glycyl lysine isopeptide (Lys-Gly) (interchain with G-Cter in ubiquitin) linkage. S648 carries the post-translational modification Phosphoserine. K661 carries the N6-acetyllysine; alternate modification. K661 participates in a covalent cross-link: Glycyl lysine isopeptide (Lys-Gly) (interchain with G-Cter in ubiquitin); alternate. K667 is covalently cross-linked (Glycyl lysine isopeptide (Lys-Gly) (interchain with G-Cter in ubiquitin)). K677 is modified (N6-acetyllysine; alternate). A Glycyl lysine isopeptide (Lys-Gly) (interchain with G-Cter in ubiquitin); alternate cross-link involves residue K677. Phosphotyrosine is present on Y686. The residue at position 688 (S688) is a Phosphoserine. The interval 690–709 (VVSGDTSPRHLSNVSSTGSI) is disordered. Position 692 is a phosphoserine; alternate (S692). Residue S692 is glycosylated (O-linked (GlcNAc...) serine; alternate). Over residues 693-708 (GDTSPRHLSNVSSTGS) the composition is skewed to polar residues. T695 carries the phosphothreonine modification. 4 positions are modified to phosphoserine: S696, S701, S708, and S714. The residue at position 719 (T719) is a Phosphothreonine.

As to quaternary structure, interacts with MARK1, MARK2, MARK3 and MARK4. Interacts with SQSTM1 when polyubiquitinated. Interacts with PSMC2 through SQSTM1. Interacts with FKBP4. Binds to CSNK1D. Interacts with SGK1. Interacts with EPM2A; the interaction dephosphorylates MAPT at Ser-369. Interacts with PIN1. Interacts with LRRK2. Interacts with LRP1, leading to endocytosis; this interaction is reduced in the presence of LRPAP1/RAP. Polyubiquitinated. Requires functional TRAF6 and may provoke SQSTM1-dependent degradation by the proteasome. Post-translationally, phosphorylation at various serine and threonine residues in S-P or T-P motifs by proline-directed protein kinases (PDPK1, CDK1, CDK5, GSK3, MAPK) (a few sites per protein in interphase, more in mitosis), and at serine residues in K-X-G-S motifs by MAP/microtubule affinity-regulating kinase (MARK1, MARK2, MARK3, MARK4), causing detachment from microtubules, and their disassembly. Phosphorylated by PHK. Dephosphorylation at several serine and threonine residues by the serine/threonine phosphatase PPP5C. Phosphorylation at Ser-554 by BRSK1 and BRSK2 in neurons affects ability to bind microtubules and plays a role in neuron polarization. Phosphorylation at Ser-188 by SGK1 mediates microtubule depolymerization and neurite formation in hippocampal neurons. As to expression, expressed in neurons and at a lower level in the liver and kidney. Isoform PNS-tau is expressed in the peripheral nervous system while the others are expressed in the central nervous system.

It is found in the cytoplasm. It localises to the cytosol. The protein localises to the cell membrane. Its subcellular location is the cytoskeleton. The protein resides in the cell projection. It is found in the axon. It localises to the dendrite. The protein localises to the secreted. Promotes microtubule assembly and stability, and might be involved in the establishment and maintenance of neuronal polarity. The C-terminus binds axonal microtubules while the N-terminus binds neural plasma membrane components, suggesting that tau functions as a linker protein between both. Axonal polarity is predetermined by tau localization (in the neuronal cell) in the domain of the cell body defined by the centrosome. The short isoforms allow plasticity of the cytoskeleton whereas the longer isoforms may preferentially play a role in its stabilization. In Mus musculus (Mouse), this protein is Microtubule-associated protein tau.